Here is a 238-residue protein sequence, read N- to C-terminus: Transcriptional activator HAC1 (238 aa).

The disordered stretch occupies residues 1 to 39 (MEMTDFELTSNSQSNLAIPTNFKSTLPPRKRAKTKEEKE). Polar residues predominate over residues 7 to 24 (ELTSNSQSNLAIPTNFKS). The 64-residue stretch at 39 to 102 (EQRRIERILR…LTCSHDAFVA (64 aa)) folds into the bZIP domain. A basic motif region spans residues 41-61 (RRIERILRNRRAAHQSREKKR). Positions 67 to 74 (LERKCSLL) are leucine-zipper. A disordered region spans residues 115–152 (GASLDTRASSHSSSDTFTPSPLNCTMEPATLSPKSMRD). Residues 117 to 134 (SLDTRASSHSSSDTFTPS) show a composition bias toward low complexity.

The protein belongs to the bZIP family. As to quaternary structure, homodimer.

The protein localises to the nucleus. Functionally, transcriptional activator involved in the unfolded protein response (UPR) pathway. Recognizes and binds to the UPR element (UPRE) in the promoter of UPR-regulated genes such as KAR2, PDI1, EUG1 and FKB2. Increases the synthesis of endoplasmic reticulum-resident proteins required for protein folding as well as components of the secretory pathway. In Saccharomyces cerevisiae (strain ATCC 204508 / S288c) (Baker's yeast), this protein is Transcriptional activator HAC1 (HAC1).